A 285-amino-acid chain; its full sequence is 2,3,4,5-tetrahydropyridine-2,6-dicarboxylate N-succinyltransferase (285 aa).

2 residues coordinate substrate: Arg-111 and Asp-148.

Belongs to the transferase hexapeptide repeat family. Homotrimer.

It localises to the cytoplasm. The catalysed reaction is (S)-2,3,4,5-tetrahydrodipicolinate + succinyl-CoA + H2O = (S)-2-succinylamino-6-oxoheptanedioate + CoA. Its pathway is amino-acid biosynthesis; L-lysine biosynthesis via DAP pathway; LL-2,6-diaminopimelate from (S)-tetrahydrodipicolinate (succinylase route): step 1/3. This chain is 2,3,4,5-tetrahydropyridine-2,6-dicarboxylate N-succinyltransferase, found in Rhizobium meliloti (strain 1021) (Ensifer meliloti).